A 135-amino-acid chain; its full sequence is Protein 4.7 (135 aa).

In Escherichia coli (Bacteriophage T7), this protein is Protein 4.7.